A 466-amino-acid polypeptide reads, in one-letter code: Tryptophan synthase beta chain 2, chloroplastic (466 aa).

K161 is modified (N6-(pyridoxal phosphate)lysine).

This sequence belongs to the TrpB family. As to quaternary structure, tetramer of two alpha and two beta chains. Pyridoxal 5'-phosphate is required as a cofactor.

It localises to the plastid. Its subcellular location is the chloroplast. The catalysed reaction is (1S,2R)-1-C-(indol-3-yl)glycerol 3-phosphate + L-serine = D-glyceraldehyde 3-phosphate + L-tryptophan + H2O. It participates in amino-acid biosynthesis; L-tryptophan biosynthesis; L-tryptophan from chorismate: step 5/5. Its function is as follows. The beta subunit is responsible for the synthesis of L-tryptophan from indole and L-serine. This is Tryptophan synthase beta chain 2, chloroplastic (TSB) from Camptotheca acuminata (Happy tree).